The primary structure comprises 156 residues: Small ribosomal subunit protein eS19A (156 aa).

The protein belongs to the eukaryotic ribosomal protein eS19 family.

This Drosophila melanogaster (Fruit fly) protein is Small ribosomal subunit protein eS19A (RpS19a).